A 161-amino-acid chain; its full sequence is 18.3 kDa class I heat shock protein (161 aa).

The sHSP domain occupies 48-161; sequence ETAAFANARI…KPQVKAINVY (114 aa).

The protein belongs to the small heat shock protein (HSP20) family. In terms of assembly, forms oligomeric structures.

It is found in the cytoplasm. This Oxybasis rubra (Red goosefoot) protein is 18.3 kDa class I heat shock protein (HSP18).